The primary structure comprises 397 residues: LIM/homeobox protein Lhx9 (397 aa).

A disordered region spans residues 40 to 60 (RSKTESRLAKGGQMNGRETNM). LIM zinc-binding domains are found at residues 69–130 (ALCA…RFSV) and 131–193 (QRCA…LLQG). The segment at residues 267 to 326 (TKRMATSFKHHQLRTMKSYFAINHNPDAKDLKQLAQKTGLTKRVLQVWFQNARAKFRRNL) is a DNA-binding region (homeobox). Disordered regions lie at residues 330-363 (ENGGVDKADGTSLPAPPSADSGALTPPGTATTLT) and 378-397 (SNLDSHEPGSPSQTTLTNLF). Over residues 353–363 (LTPPGTATTLT) the composition is skewed to low complexity. Over residues 387–397 (SPSQTTLTNLF) the composition is skewed to polar residues.

It is found in the nucleus. Functionally, may be involved in gonadal development. This Gallus gallus (Chicken) protein is LIM/homeobox protein Lhx9 (LHX9).